Reading from the N-terminus, the 808-residue chain is Ribosome biogenesis protein BOP1 homolog (808 aa).

Low complexity-rich tracts occupy residues 1–25 (MTSP…LTPC) and 33–50 (ATSS…SSFD). The interval 1–55 (MTSPKGKPSPKRSAPAPATAALTPCAEERTEGATSSASASASSHISSSFDSPRDD) is disordered. WD repeat units lie at residues 430-469 (GHTA…LMKR), 640-680 (KFSE…RRFK), 682-720 (SGGV…KPYK), 724-766 (SHKG…DYNK), and 777-808 (KHQR…AWTE).

It belongs to the WD repeat BOP1/ERB1 family.

It is found in the nucleus. It localises to the nucleolus. The protein resides in the nucleoplasm. In terms of biological role, required for maturation of ribosomal RNAs and formation of the large ribosomal subunit. This Leishmania major protein is Ribosome biogenesis protein BOP1 homolog.